We begin with the raw amino-acid sequence, 317 residues long: Ribosomal protein L11 methyltransferase (317 aa).

Positions 158, 179, 201, and 244 each coordinate S-adenosyl-L-methionine.

Belongs to the methyltransferase superfamily. PrmA family.

The protein localises to the cytoplasm. The catalysed reaction is L-lysyl-[protein] + 3 S-adenosyl-L-methionine = N(6),N(6),N(6)-trimethyl-L-lysyl-[protein] + 3 S-adenosyl-L-homocysteine + 3 H(+). Functionally, methylates ribosomal protein L11. The protein is Ribosomal protein L11 methyltransferase of Lactococcus lactis subsp. cremoris (strain MG1363).